The sequence spans 468 residues: MSVSSRGAASPAHRTAPTKWLFTKEEMKKTASIQEGMSREEELASRQMAAAFIQEMIDGLNNVKDPKMKIGHTGLCVAHTHMHRFYYLHSFKKYDYRDVGAACVFLAGKSQECPRKLSHVISVWRERKDRKQLTTETARNEAAQIIVLLESMILQTIAFDLNVHLPHIYVLDIMKKVDKKEHYRPLTSCAYYFATDVIAVTDWSLRYSAASMSIVIIHLMAAYANVRIERLFADFINEDSPWYAKFDETMTNEKLREMEVDFLVTYRNSCQFHHASKFNFREHRPMLENPDVRKLDRTRDARSHSPMVHHVPDSTVNVRPRAYVPRDELTVERLNKERGVEEERRKRERDRMAGKLDSSTSSEKRARIDPLANNFVSSSSSSNGKLAPPPIPPQLNFPPPPIVSSGYNHKNQINRKNHENNHTNSSVSPAFVPSARTFDVAPMLTPPTAPKLQSADNSDMDLEDGELE.

Positions 336 to 354 (KERGVEEERRKRERDRMAG) are enriched in basic and acidic residues. Positions 336-468 (KERGVEEERR…DMDLEDGELE (133 aa)) are disordered. Pro residues predominate over residues 387–402 (APPPIPPQLNFPPPPI). Over residues 458-468 (SDMDLEDGELE) the composition is skewed to acidic residues.

Belongs to the cyclin family. Cyclin C subfamily.

Its function is as follows. Regulatory subunit of the cyclin-dependent kinase pair (CDK9/cyclin T) complex, also called positive transcription elongation factor B (P-TEFb), which is proposed to facilitate the transition from abortive to production elongation by phosphorylating the CTD (carboxy-terminal domain) of the large subunit of RNA polymerase II (RNAP II). This chain is Cyclin-T1.1, found in Caenorhabditis elegans.